We begin with the raw amino-acid sequence, 401 residues long: LysM domain-containing GPI-anchored protein LYP4 (401 aa).

A signal peptide spans 1–23 (MPPPLLLLLLLAAAAAAVAPARS). Disulfide bonds link Cys30/Cys96, Cys36/Cys162, Cys94/Cys160, and Cys96/Cys162. 2 LysM domains span residues 106-156 (VRYV…TLFV) and 175-218 (LTYV…IIVV). 2 cysteine pairs are disulfide-bonded: Cys223-Cys255 and Cys250-Cys279. N-linked (GlcNAc...) asparagine glycosylation occurs at Asn240. Residues Asn281, Asn288, and Asn310 are each glycosylated (N-linked (GlcNAc...) asparagine). Ser373 carries the GPI-anchor amidated serine lipid modification. The propeptide at 374–401 (SGPPPAGRHVVGDVLGAFALCLVGNLLW) is removed in mature form.

As to quaternary structure, interacts with LYP6. Interacts with CEBIP. Interacts with CERK1. As to expression, expressed in roots and leaves.

It is found in the cell membrane. Functionally, functions in innate immunity. Functions as a pattern recognition receptor (PRR), sensing bacterial peptidoglycan (PGN) and fungal chitin at the cell surface. Involved in resistance against the bacterial pathogen Xanthomonas oryzae pv. oryzae (Xoo) and the fungal pathogen Magnaporthe oryzae. Binds PGN and fungal chitin in vitro. Involved in microbe-associated molecular patterns (MAMPs) perception and participates in the activation of defense genes against the bacterial pathogen Xanthomonas oryzae pv. oryzicola (Xoc) or the fungal pathogen Magnaporthe oryzae. The protein is LysM domain-containing GPI-anchored protein LYP4 of Oryza sativa subsp. japonica (Rice).